The chain runs to 638 residues: Chaperone protein HtpG (638 aa).

An a; substrate-binding region spans residues 1–328 (MGDVEELKFS…SSDLPLNISR (328 aa)). The b stretch occupies residues 329–558 (ETLQNNMVIE…EHALDIRMER (230 aa)). The interval 484-508 (LEKFTEGDDQQSTKKKKEKKDTDDA) is disordered. The segment at 559–638 (FLREQKQLSY…NQVLARLFKK (80 aa)) is c.

This sequence belongs to the heat shock protein 90 family. Homodimer.

It localises to the cytoplasm. Functionally, molecular chaperone. Has ATPase activity. The chain is Chaperone protein HtpG from Anaplasma marginale (strain St. Maries).